A 298-amino-acid chain; its full sequence is FH protein interacting protein FIP2 (298 aa).

In terms of domain architecture, BTB spans 9–80 (SMVRLNIGGK…LRDGVIPSLS (72 aa)). 4 Pentapeptide repeat domains span residues 129–165 (ERVR…FFSR), 166–203 (TNLQ…GALL), 216–255 (ACLV…NLKG), and 256–295 (AKLS…NMTG).

In terms of assembly, interacts with FH1. Expressed in all tissues but preferentially in roots and flowers.

Its pathway is protein modification; protein ubiquitination. Its function is as follows. May act as a substrate-specific adapter of an E3 ubiquitin-protein ligase complex (CUL3-RBX1-BTB) which mediates the ubiquitination and subsequent proteasomal degradation of target proteins. The polypeptide is FH protein interacting protein FIP2 (FIP2) (Arabidopsis thaliana (Mouse-ear cress)).